We begin with the raw amino-acid sequence, 563 residues long: MIDINSSSSSSSSNNNNSNNNNNNNNNNNSNVFEINSSIKPYFTCIVFVISLIFICSSKNIVTKHLPIGRAGSSIIGATLMVYFGIIQPKEIGSVINWDTIILLMSMMMLSNYMEQANIWGMASKILLWKCKSTSIFMVRVCLISSIMSSILTNDTVCVTLTPIVISACKSTNLTFFPFLMAIATSANIGSSALPVGNPQNMIIATAGGLNFFNFFKVSIVSSILGVCLNTILLLLYFKKDLKNLNSNFNQLIETVNPKVEEIDNNHHDDDGANNQSKNEKEMENINKEVEEEQHNNDDDDDDGFNENKNNNNNGGHAILLVASSMDSIDLSDCSIINKDKKKKENFIEIYFNSKEKSIETIVNIIKLIFKFRVAIILTLVLIGFFIGMHMGFTVLFGVSILMICERKDITDIINSVDWELLLFFSGLFVLVEGFDRQFEKEAWTILEPFVPIDSTHLNVLKIFIFSILILVLCNILGNVPLVLSLSPRLLEALAPDFTWILLAFVSTVAGNLTLVGSVANLIVAEKSKSYHEIGFLEYLKFGVPSTILVILIGVPIVVLIGK.

Residues Met-1–Asn-26 are disordered. A run of 5 helical transmembrane segments spans residues Ile-35–Ile-55, Pro-67–Ile-87, Glu-91–Ser-111, Phe-176–Val-196, and Val-218–Phe-238. Basic and acidic residues predominate over residues Glu-262 to Asp-271. A disordered region spans residues Glu-262–Glu-284. Residues Ala-273–Asp-303 are a coiled coil. 5 helical membrane passes run Ile-376–Leu-396, Ile-413–Glu-433, Ile-463–Val-483, Trp-500–Ala-520, and Phe-542–Gly-562.

This sequence belongs to the CitM (TC 2.A.11) transporter family.

The protein resides in the cell membrane. This is Putative transporter arsB (arsB) from Dictyostelium discoideum (Social amoeba).